We begin with the raw amino-acid sequence, 196 residues long: Small ribosomal subunit protein uS4c (196 aa).

An S4 RNA-binding domain is found at Met89 to Pro157.

This sequence belongs to the universal ribosomal protein uS4 family. In terms of assembly, part of the 30S ribosomal subunit. Contacts protein S5. The interaction surface between S4 and S5 is involved in control of translational fidelity.

Its subcellular location is the plastid. The protein resides in the chloroplast. One of the primary rRNA binding proteins, it binds directly to 16S rRNA where it nucleates assembly of the body of the 30S subunit. Its function is as follows. With S5 and S12 plays an important role in translational accuracy. In Elymus canadensis (Canada wild rye), this protein is Small ribosomal subunit protein uS4c (rps4).